The sequence spans 476 residues: Stromelysin-2 (476 aa).

The N-terminal stretch at 1–17 (MEPLAILVLLCFPICSA) is a signal peptide. Residues 18-99 (YPLHGAVRQD…PRCGVPDVGG (82 aa)) constitute a propeptide, activation peptide. The short motif at 90–97 (PRCGVPDV) is the Cysteine switch element. The Zn(2+) site is built by C92, H168, D170, H183, H196, and H218. E219 is an active-site residue. Zn(2+) contacts are provided by H222 and H228. Hemopexin repeat units follow at residues 286–335 (PVKC…WPSL), 336–382 (PSGL…GFPP), 384–432 (VKKI…FPGI), and 433–476 (EPQV…WLLC). C289 and C476 are disulfide-bonded.

Belongs to the peptidase M10A family. Zn(2+) is required as a cofactor. It depends on Ca(2+) as a cofactor.

It localises to the secreted. Its subcellular location is the extracellular space. The protein resides in the extracellular matrix. The enzyme catalyses Similar to stromelysin 1, but action on collagen types III, IV and V is weak.. Can degrade fibronectin, gelatins of type I, III, IV, and V; weakly collagens III, IV, and V. Activates procollagenase. The polypeptide is Stromelysin-2 (Mmp10) (Rattus norvegicus (Rat)).